The following is a 350-amino-acid chain: Ribonuclease H2 subunit B (350 aa).

Polar residues predominate over residues 134 to 151; the sequence is QDYSNSSDTGENQKSNSK. Residues 134-153 are disordered; it reads QDYSNSSDTGENQKSNSKTN.

The protein belongs to the RNase H2 subunit B family. Highly divergent. The RNase 2 complex is a heterotrimer composed of the catalytic subunit RNH201 and of the non-catalytic subunits RNH202 and RNH203.

It localises to the nucleus. Its function is as follows. Non catalytic subunit of RNase H2, an endonuclease that specifically degrades the RNA of RNA:DNA hybrids. Participates in DNA replication, possibly by mediating the removal of lagging-strand Okazaki fragment RNA primers during DNA replication. Mediates the excision of single ribonucleotides from DNA:RNA duplexes. This Saccharomyces cerevisiae (strain ATCC 204508 / S288c) (Baker's yeast) protein is Ribonuclease H2 subunit B (RNH202).